The primary structure comprises 221 residues: Glutathione S-transferase class-mu 26 kDa isozyme 1 (221 aa).

The GST N-terminal domain occupies 2-82; the sequence is PAKLGYWKIR…YIADKHGMIG (81 aa). Glutathione is bound by residues 7 to 8, 40 to 44, 53 to 54, and 66 to 67; these read YW, WFSKK, NL, and QS. Residues 84–202 enclose the GST C-terminal domain; sequence TPEERARVSM…ESNRFIKWPL (119 aa). Tyr110 serves as a coordination point for substrate.

Belongs to the GST superfamily. Mu family. As to quaternary structure, homodimer.

It carries out the reaction RX + glutathione = an S-substituted glutathione + a halide anion + H(+). Its function is as follows. Conjugation of reduced glutathione to a wide number of exogenous and endogenous hydrophobic electrophiles. GST isoenzymes appear to play a central role in the parasite detoxification system. Other functions are also suspected including a role in increasing the solubility of haematin in the parasite gut. In Fasciola hepatica (Liver fluke), this protein is Glutathione S-transferase class-mu 26 kDa isozyme 1.